The following is a 333-amino-acid chain: NADH-quinone oxidoreductase subunit H (333 aa).

The next 8 helical transmembrane spans lie at Ile17–Ile37, Phe88–Phe108, Ile117–Thr137, Ile159–Leu179, Val191–Glu211, Phe241–Phe261, Phe273–Trp293, and Val313–Phe333.

Belongs to the complex I subunit 1 family. In terms of assembly, NDH-1 is composed of 14 different subunits. Subunits NuoA, H, J, K, L, M, N constitute the membrane sector of the complex.

The protein resides in the cell membrane. It catalyses the reaction a quinone + NADH + 5 H(+)(in) = a quinol + NAD(+) + 4 H(+)(out). NDH-1 shuttles electrons from NADH, via FMN and iron-sulfur (Fe-S) centers, to quinones in the respiratory chain. The immediate electron acceptor for the enzyme in this species is believed to be ubiquinone. Couples the redox reaction to proton translocation (for every two electrons transferred, four hydrogen ions are translocated across the cytoplasmic membrane), and thus conserves the redox energy in a proton gradient. This subunit may bind ubiquinone. The polypeptide is NADH-quinone oxidoreductase subunit H (Anoxybacillus flavithermus (strain DSM 21510 / WK1)).